A 143-amino-acid chain; its full sequence is Large ribosomal subunit protein uL11 (143 aa).

It belongs to the universal ribosomal protein uL11 family. Part of the ribosomal stalk of the 50S ribosomal subunit. Interacts with L10 and the large rRNA to form the base of the stalk. L10 forms an elongated spine to which L12 dimers bind in a sequential fashion forming a multimeric L10(L12)X complex. One or more lysine residues are methylated.

Its function is as follows. Forms part of the ribosomal stalk which helps the ribosome interact with GTP-bound translation factors. This chain is Large ribosomal subunit protein uL11, found in Paraburkholderia phytofirmans (strain DSM 17436 / LMG 22146 / PsJN) (Burkholderia phytofirmans).